Consider the following 88-residue polypeptide: Large ribosomal subunit protein uL29 (88 aa).

It belongs to the universal ribosomal protein uL29 family.

The protein is Large ribosomal subunit protein uL29 (rpl29) of Sulfurisphaera tokodaii (strain DSM 16993 / JCM 10545 / NBRC 100140 / 7) (Sulfolobus tokodaii).